The sequence spans 416 residues: STAM-binding protein-like (416 aa).

The interval 214–244 (SYGTVQPHPPAVDRSLKPSSYGSNSSGVTSD) is disordered. Low complexity predominate over residues 230 to 243 (KPSSYGSNSSGVTS). The region spanning 249 to 380 (VKIPRDVCCK…LTDYGMKEIG (132 aa)) is the MPN domain. Zn(2+)-binding residues include histidine 327, histidine 329, aspartate 340, histidine 342, cysteine 382, histidine 388, and histidine 390. The short motif at 327 to 340 (HTHPTQTAFLSSVD) is the JAMM motif element.

It belongs to the peptidase M67C family. Zn(2+) serves as cofactor.

In terms of biological role, zinc metalloprotease that specifically cleaves 'Lys-63'-linked polyubiquitin chains. Does not cleave 'Lys-48'-linked polyubiquitin chains. Functions at the endosome and is able to oppose the ubiquitin-dependent sorting of receptors to lysosomes. The protein is STAM-binding protein-like (stambp) of Xenopus laevis (African clawed frog).